A 1174-amino-acid polypeptide reads, in one-letter code: Fanconi anemia group J protein homolog (1174 aa).

A Helicase ATP-binding domain is found at 11–445 (GGVKIHFPCR…KSHEPLRDVC (435 aa)). The segment covering 101 to 126 (NLDTSPHFNSPSKPSSGRNGVSTPCQ) has biased composition (polar residues). 2 disordered regions span residues 101 to 160 (NLDT…EKKR) and 187 to 208 (LASE…DRKD). Residues 134–143 (LAAKLSAKKQ) are compositionally biased toward low complexity. Residues 158-175 (KKRIRPLETTQQIRKRHC) carry the Nuclear localization signal motif. 185-192 (ARLASEKR) provides a ligand contact to ATP. [4Fe-4S] cluster is bound by residues C286, C301, C313, and C353. The DEAH box signature appears at 393-396 (VILD). The segment at 888 to 1063 (SRRHQKVTNR…SNETADTSLG (176 aa)) is interaction with BRCA1. Polar residues-rich tracts occupy residues 923 to 935 (TSVS…SPEN) and 990 to 1001 (SRSSSPTFGKQT). 2 disordered regions span residues 923–1001 (TSVS…GKQT) and 1102–1155 (LSPG…SSHS). S929, S932, and S994 each carry phosphoserine. Acidic residues predominate over residues 1138–1147 (DTNEENGELV). K1174 is subject to N6-acetyllysine.

It belongs to the DEAD box helicase family. DEAH subfamily. As to quaternary structure, binds directly to the BRCT domains of BRCA1. Interacts with the CIA complex components CIAO1, CIAO2B and MMS19. [4Fe-4S] cluster serves as cofactor. In terms of processing, phosphorylated. Phosphorylation is necessary for interaction with BRCA1, and is cell-cycle regulated.

The protein resides in the nucleus. The protein localises to the cytoplasm. The enzyme catalyses Couples ATP hydrolysis with the unwinding of duplex DNA at the replication fork by translocating in the 5'-3' direction. This creates two antiparallel DNA single strands (ssDNA). The leading ssDNA polymer is the template for DNA polymerase III holoenzyme which synthesizes a continuous strand.. It carries out the reaction ATP + H2O = ADP + phosphate + H(+). Its function is as follows. DNA-dependent helicase and 5' to 3' DNA helicase required for the maintenance of chromosomal stability. Acts late in the Fanconi anemia pathway, after FANCD2 ubiquitination. Involved in the repair of DNA double-strand breaks by homologous recombination in a manner that depends on its association with BRCA1. Involved in the repair of abasic sites at replication forks by promoting the degradation of DNA-protein cross-links: acts by catalyzing unfolding of HMCES DNA-protein cross-link via its helicase activity, exposing the underlying DNA and enabling cleavage of the DNA-protein adduct by the SPRTN metalloprotease. Can unwind RNA:DNA hybrids and G-quadruplex DNA. In Mus musculus (Mouse), this protein is Fanconi anemia group J protein homolog.